The sequence spans 539 residues: Efflux pump roqT (539 aa).

Residues 1 to 25 (MEKEVATDPLPQEIPSDAPDEGGSL) form a disordered region. Transmembrane regions (helical) follow at residues 36 to 56 (VSLTIALCLGVFCMSLDVTII), 108 to 128 (LFLFEVGSLVCGVTPTSVGLI), 133 to 153 (IAGLGAGGLFSGSLLIIAQTV), 160 to 180 (VFTALLGSMYGIASVAGPPLG), 191 to 211 (WCFYINLPIGAVTAAFVLFFF), 233 to 253 (IGSFFFLPAIVCLLLALQWGG), 262 to 282 (RIIVLFVLTGVLLLAFVAVQI), 305 to 325 (WFAITLNGAYFVFIYYLPIWF), 338 to 360 (VMNLPSIIAVVVVSIISGMLVTI), 362 to 384 (GYYNPVMIMSSVTLSIGAGLLST), 395 to 415 (IGYQILMGLGVGLGMQQPFMV), and 502 to 522 (AFYVGVALASLSCIGTIALEW).

This sequence belongs to the major facilitator superfamily. TCR/Tet family.

The protein resides in the membrane. Its function is as follows. Efflux pump; part of the gene cluster that mediates the biosynthesis of the mycotoxins roquefortine C and meleagrin. This chain is Efflux pump roqT, found in Penicillium rubens (strain ATCC 28089 / DSM 1075 / NRRL 1951 / Wisconsin 54-1255) (Penicillium chrysogenum).